A 256-amino-acid chain; its full sequence is POU domain class 2-associating factor 1 (256 aa).

Residues 1-23 (MLWQKPTAPEQAPAPARPYQGVR) form a disordered region. Positions 16–38 (ARPYQGVRVKEPVKELLRRKRGH) constitute an OCA domain.

Belongs to the POU2AF family. As to quaternary structure, interacts with POU2F1/OCT1 and POU2F2/OCT2; the interaction increases POU2F1 and POU2F2 transactivation activity. Post-translationally, ubiquitinated; mediated by SIAH1 or SIAH2 and leading to its subsequent proteasomal degradation. As to expression, B-cell specific. Detected in mainly in spleen, but also in thymus, periphral blood leukocyte and small intestine.

The protein resides in the nucleus. Its function is as follows. Transcriptional coactivator that specifically associates with either POU2F1/OCT1 or POU2F2/OCT2. It boosts the POU2F1/OCT1 mediated promoter activity and to a lesser extent, that of POU2F2/OCT2. It recognizes the POU domains of POU2F1/OCT1 and POU2F2/OCT2. It is essential for the response of B-cells to antigens and required for the formation of germinal centers. Regulates IL6 expression in B cells as POU2F2/OCT2 coactivator. In Homo sapiens (Human), this protein is POU domain class 2-associating factor 1.